Reading from the N-terminus, the 224-residue chain is Fibronectin type III domain-containing protein 9 (224 aa).

In terms of domain architecture, Fibronectin type-III spans 1-101 (MNIEVGNISY…FHTLDKSPLA (101 aa)). The chain crosses the membrane as a helical span at residues 113 to 133 (LWVLMAILLACFTAVLAFICL). Positions 175-224 (LQGLPLVEMPRKNSRDGAELDPEANQDAPDAGALQRGGGDPPAILPHCGE) are disordered. A compositionally biased stretch (basic and acidic residues) spans 183–192 (MPRKNSRDGA).

Its subcellular location is the membrane. The chain is Fibronectin type III domain-containing protein 9 (FNDC9) from Homo sapiens (Human).